The following is a 78-amino-acid chain: Large ribosomal subunit protein bL28 (78 aa).

It belongs to the bacterial ribosomal protein bL28 family.

This is Large ribosomal subunit protein bL28 from Parasynechococcus marenigrum (strain WH8102).